A 347-amino-acid chain; its full sequence is UPF0283 membrane protein ECA1987 (347 aa).

The segment covering 1-11 has biased composition (basic and acidic residues); that stretch reads MNEPLKPRVTF. The segment at 1-48 is disordered; sequence MNEPLKPRVTFDDVSPQEPQPQLRAGLAFDEQSSTPFSPISREEEVPE. The next 3 membrane-spanning stretches (helical) occupy residues 70 to 90, 99 to 119, and 213 to 233; these read MVMA…VQSL, WIAL…VGSL, and ESTL…FIAW.

This sequence belongs to the UPF0283 family.

Its subcellular location is the cell inner membrane. The chain is UPF0283 membrane protein ECA1987 from Pectobacterium atrosepticum (strain SCRI 1043 / ATCC BAA-672) (Erwinia carotovora subsp. atroseptica).